We begin with the raw amino-acid sequence, 348 residues long: Methylthioribose-1-phosphate isomerase (348 aa).

Substrate contacts are provided by residues R48 to A50, R90, and Q195. The active-site Proton donor is D236. N246 to K247 serves as a coordination point for substrate.

It belongs to the eIF-2B alpha/beta/delta subunits family. MtnA subfamily.

The enzyme catalyses 5-(methylsulfanyl)-alpha-D-ribose 1-phosphate = 5-(methylsulfanyl)-D-ribulose 1-phosphate. The protein operates within amino-acid biosynthesis; L-methionine biosynthesis via salvage pathway; L-methionine from S-methyl-5-thio-alpha-D-ribose 1-phosphate: step 1/6. Catalyzes the interconversion of methylthioribose-1-phosphate (MTR-1-P) into methylthioribulose-1-phosphate (MTRu-1-P). This Exiguobacterium sibiricum (strain DSM 17290 / CCUG 55495 / CIP 109462 / JCM 13490 / 255-15) protein is Methylthioribose-1-phosphate isomerase.